The sequence spans 205 residues: GTP cyclohydrolase-2 (205 aa).

49–53 (RLHSE) lines the GTP pocket. Residues C54, C65, and C67 each coordinate Zn(2+). GTP-binding positions include Q70, 92-94 (EGR), and T114. D126 (proton acceptor) is an active-site residue. The active-site Nucleophile is the R128. Residues T149 and K154 each coordinate GTP.

The protein belongs to the GTP cyclohydrolase II family. It depends on Zn(2+) as a cofactor.

It catalyses the reaction GTP + 4 H2O = 2,5-diamino-6-hydroxy-4-(5-phosphoribosylamino)-pyrimidine + formate + 2 phosphate + 3 H(+). It functions in the pathway cofactor biosynthesis; riboflavin biosynthesis; 5-amino-6-(D-ribitylamino)uracil from GTP: step 1/4. In terms of biological role, catalyzes the conversion of GTP to 2,5-diamino-6-ribosylamino-4(3H)-pyrimidinone 5'-phosphate (DARP), formate and pyrophosphate. The protein is GTP cyclohydrolase-2 of Pseudomonas paraeruginosa (strain DSM 24068 / PA7) (Pseudomonas aeruginosa (strain PA7)).